Consider the following 488-residue polypeptide: Protein Notchless (488 aa).

Positions methionine 1–isoleucine 22 are disordered. A ubiquitin-like (UBL) domain region spans residues proline 19–alanine 101. 8 WD repeats span residues glycine 117–threonine 156, glycine 159–arginine 198, glycine 202–asparagine 246, glycine 249–threonine 287, leucine 329–arginine 370, glycine 373–threonine 412, glycine 415–glutamate 454, and glycine 457–tyrosine 488.

This sequence belongs to the NLE1/RSA4 family. In terms of assembly, interacts with Notch (via cytoplasmic domain). Associates with the pre-60S ribosomal particle.

Its subcellular location is the nucleus. The protein localises to the nucleolus. Functionally, plays a role in regulating Notch activity. In Drosophila melanogaster (Fruit fly), this protein is Protein Notchless.